The sequence spans 277 residues: 4-hydroxy-tetrahydrodipicolinate reductase (277 aa).

NAD(+) is bound by residues 11–16 and 110–112; these read GALGRM and GTT. H166 acts as the Proton donor/acceptor in catalysis. H167 is a binding site for (S)-2,3,4,5-tetrahydrodipicolinate. K170 serves as the catalytic Proton donor. 176-177 is a binding site for (S)-2,3,4,5-tetrahydrodipicolinate; sequence GT.

This sequence belongs to the DapB family.

The protein localises to the cytoplasm. The catalysed reaction is (S)-2,3,4,5-tetrahydrodipicolinate + NAD(+) + H2O = (2S,4S)-4-hydroxy-2,3,4,5-tetrahydrodipicolinate + NADH + H(+). The enzyme catalyses (S)-2,3,4,5-tetrahydrodipicolinate + NADP(+) + H2O = (2S,4S)-4-hydroxy-2,3,4,5-tetrahydrodipicolinate + NADPH + H(+). The protein operates within amino-acid biosynthesis; L-lysine biosynthesis via DAP pathway; (S)-tetrahydrodipicolinate from L-aspartate: step 4/4. Catalyzes the conversion of 4-hydroxy-tetrahydrodipicolinate (HTPA) to tetrahydrodipicolinate. This is 4-hydroxy-tetrahydrodipicolinate reductase from Synechococcus sp. (strain CC9605).